The following is a 90-amino-acid chain: DNA-binding protein HU-1 (90 aa).

Thr-4 bears the Phosphothreonine mark. A disordered region spans residues 55 to 90 (RSARKGRNPQTGEEIEIPATKNPAFKPGKQLKDAVN).

Belongs to the bacterial histone-like protein family. As to quaternary structure, homodimer.

Histone-like DNA-binding protein which is capable of wrapping DNA to stabilize it, and thus to prevent its denaturation under extreme environmental conditions. The protein is DNA-binding protein HU-1 (hup1) of Halalkalibacterium halodurans (strain ATCC BAA-125 / DSM 18197 / FERM 7344 / JCM 9153 / C-125) (Bacillus halodurans).